The following is a 121-amino-acid chain: Alpha-endosulfine (121 aa).

Residues 1–53 form a disordered region; that stretch reads MSQKQEEENPAEETGEEKQDTQEKEGILPEKAEEAKLKAKYPSLGQKPGGSDF. S2 bears the N-acetylserine mark. The residue at position 2 (S2) is a Phosphoserine. Basic and acidic residues predominate over residues 16–37; that stretch reads EEKQDTQEKEGILPEKAEEAKL. T21 is modified (phosphothreonine). The residue at position 43 (S43) is a Phosphoserine. At S67 the chain carries Phosphoserine; by GWL. The segment at 79-121 is disordered; it reads NKQLPSAGPDKNLVTGDHIPTPQDLPQRKSSLVTSKLAGGQVE. S109 bears the Phosphoserine; by PKA mark.

This sequence belongs to the endosulfine family. As to quaternary structure, interacts (when phosphorylated at Ser-67) with PPP2R2D. Interacts with ABCC8. Interacts with SNCA; interaction is disrupted when phosphorylated at Ser-109. In terms of processing, phosphorylation at Ser-67 by GWL during mitosis is essential for interaction with PPP2R2D (PR55-delta) and subsequent inactivation of PP2A. Phosphorylated by PKA.

It is found in the cytoplasm. In terms of biological role, protein phosphatase inhibitor that specifically inhibits protein phosphatase 2A (PP2A) during mitosis. When phosphorylated at Ser-67 during mitosis, specifically interacts with PPP2R2D (PR55-delta) and inhibits its activity, leading to inactivation of PP2A, an essential condition to keep cyclin-B1-CDK1 activity high during M phase. Also acts as a stimulator of insulin secretion by interacting with sulfonylurea receptor (ABCC8), thereby preventing sulfonylurea from binding to its receptor and reducing K(ATP) channel currents. The protein is Alpha-endosulfine (ENSA) of Bos taurus (Bovine).